Here is a 274-residue protein sequence, read N- to C-terminus: HMP-PP phosphatase (274 aa).

D8 (nucleophile) is an active-site residue. D8, D10, and D213 together coordinate Mg(2+).

It belongs to the HAD-like hydrolase superfamily. Cof family. Mg(2+) is required as a cofactor.

It carries out the reaction 4-amino-2-methyl-5-(diphosphooxymethyl)pyrimidine + H2O = 4-amino-2-methyl-5-(phosphooxymethyl)pyrimidine + phosphate + H(+). Catalyzes the hydrolysis of 4-amino-2-methyl-5-hydroxymethylpyrimidine pyrophosphate (HMP-PP) to 4-amino-2-methyl-5-hydroxymethylpyrimidine phosphate (HMP-P). This is HMP-PP phosphatase from Serratia proteamaculans (strain 568).